We begin with the raw amino-acid sequence, 373 residues long: Transcription factor NF-E2 45 kDa subunit (373 aa).

The interval 1–83 is required for interaction with MAPK8; sequence MSPCPPQQSR…SGFPLPPPPY (83 aa). Positions 1-206 are transactivation domain; the sequence is MSPCPPQQSR…PAAETPLALE (206 aa). Short sequence motifs (PXY motif) lie at residues 61–65 and 79–83; these read PPTTY and PPPPY. The tract at residues 127–150 is disordered; that stretch reads LDIGLPAGPPKPQEDPESDSGLSL. Serine 157 carries the phosphoserine; by MAPK8 modification. Serine 170 carries the post-translational modification Phosphoserine; by PKA. The segment at 205 to 226 is disordered; it reads LEPSSGPVRAKPTARGEAGSRD. The bZIP domain maps to 266–329; that stretch reads LVRDIRRRGK…EVMRQQLTEL (64 aa). Positions 268–287 are basic motif; it reads RDIRRRGKNKVAAQNCRKRK. Residues 291-298 are leucine-zipper; it reads IVQLEREL. A Glycyl lysine isopeptide (Lys-Gly) (interchain with G-Cter in SUMO1) cross-link involves residue lysine 368.

The protein belongs to the bZIP family. CNC subfamily. Homodimer; can bind DNA as a homodimer. Erythroid transcription activator nuclear factor erythroid-derived 2 (NF-E2), composed of a heterodimer of NFE2 and MAFK, possesses transactivation activity on beta-globin. Also forms high affinity heterodimer with MAFG; the interaction promotes erythropoiesis. Interacts (via the PXY motif 1) with ITCH (via the WW 1 domain); the interaction promotes 'Lys63'-linked ubiquitination of NFE2, translocates it to the cytoplasm and inhibits its transactivation activity. Interacts with KMT2D/MLL2; the interaction promotes transactivation of the beta-globin locus. Interacts with MAPK8 (phosphorylated form); the interaction leads to phosphorylation of NFE2 in undifferentiated cells. Phosphorylated on serine residues. In undifferentiated erythrocytes, phosphorylated by MAPK8 which then leads to ubiquitination and protein degradation. In terms of processing, sumoylated. Sumoylation is required for translocation to nuclear bodies PODs, anchoring to the gene loci, and transactivation of the beta-globin gene. Post-translationally, ubiquitinated mainly by 'Lys63'-linked ubiquitin. Polyubiquitination with 'Lys63'-linked ubiquitin by ITCH retains NFE2 in the cytoplasm preventing its transactivation activity. In undifferentiated erythrocyte, ubiquitinated after MAPK8-mediatd phosphorylation leading to protein degradation. Expressed in hematopoietic cells and also in colon and testis.

It is found in the nucleus. Its subcellular location is the PML body. It localises to the cytoplasm. In terms of biological role, component of the NF-E2 complex essential for regulating erythroid and megakaryocytic maturation and differentiation. Binds to the hypersensitive site 2 (HS2) of the beta-globin control region (LCR). This subunit (NFE2) recognizes the TCAT/C sequence of the AP-1-like core palindrome present in a number of erythroid and megakaryocytic gene promoters. Requires MAFK or other small MAF proteins for binding to the NF-E2 motif. May play a role in all aspects of hemoglobin production from globin and heme synthesis to procurement of iron. The chain is Transcription factor NF-E2 45 kDa subunit (NFE2) from Homo sapiens (Human).